Reading from the N-terminus, the 101-residue chain is MIGLSHYLTVAAILFTLGVLGIFINRKNVIVILMCVELILLAVNINLVAFSTHLGDIVGQVFALFVLTVAAAEAAIGLAILVVFFRNRGSIAVEDVNMMKG.

The next 3 helical transmembrane spans lie at 4-24 (LSHY…GIFI), 30-50 (IVIL…LVAF), and 65-85 (FVLT…VVFF).

Belongs to the complex I subunit 4L family. NDH-1 is composed of 14 different subunits. Subunits NuoA, H, J, K, L, M, N constitute the membrane sector of the complex.

Its subcellular location is the cell inner membrane. The catalysed reaction is a quinone + NADH + 5 H(+)(in) = a quinol + NAD(+) + 4 H(+)(out). Its function is as follows. NDH-1 shuttles electrons from NADH, via FMN and iron-sulfur (Fe-S) centers, to quinones in the respiratory chain. The immediate electron acceptor for the enzyme in this species is believed to be ubiquinone. Couples the redox reaction to proton translocation (for every two electrons transferred, four hydrogen ions are translocated across the cytoplasmic membrane), and thus conserves the redox energy in a proton gradient. The protein is NADH-quinone oxidoreductase subunit K of Methylobacterium sp. (strain 4-46).